The sequence spans 490 residues: Cytochrome P450 90D2 (490 aa).

A helical transmembrane segment spans residues 4–24 (AAAGWAAPAFAVAAVVIWVVL). Cys-437 is a heme binding site.

It belongs to the cytochrome P450 family. Heme serves as cofactor.

It is found in the membrane. The enzyme catalyses 6-deoxoteasterone + reduced [NADPH--hemoprotein reductase] + O2 = 3-dehydro-6-deoxoteasterone + oxidized [NADPH--hemoprotein reductase] + 2 H2O + H(+). It participates in plant hormone biosynthesis; brassinosteroid biosynthesis. Its function is as follows. Catalyzes the C6-oxidation step in brassinosteroids biosynthesis. May convert 6-deoxoteasterone (6-deoxoTE) to 3-dehydro-6-deoxoteasterone (6-deoxo3DT, 6-deoxo3DHT), and teasterone (TE) to 3-dehydroteasterone (3DT, 3-DHT). Involved in the elongation of leaf sheaths and stems. This Oryza sativa subsp. indica (Rice) protein is Cytochrome P450 90D2.